Consider the following 399-residue polypeptide: Elongation factor Tu (399 aa).

A tr-type G domain is found at 10 to 209 (KPHVNIGTIG…AVDSYIPTPK (200 aa)). The interval 19–26 (GHVDHGKT) is G1. Residue 19 to 26 (GHVDHGKT) coordinates GTP. Residue Thr26 coordinates Mg(2+). The interval 60–64 (GITIA) is G2. A G3 region spans residues 81-84 (DCPG). Residues 81 to 85 (DCPGH) and 136 to 139 (NKTD) each bind GTP. Positions 136-139 (NKTD) are G4. The G5 stretch occupies residues 174–176 (SAL).

Belongs to the TRAFAC class translation factor GTPase superfamily. Classic translation factor GTPase family. EF-Tu/EF-1A subfamily. In terms of assembly, monomer.

The protein resides in the cytoplasm. It carries out the reaction GTP + H2O = GDP + phosphate + H(+). GTP hydrolase that promotes the GTP-dependent binding of aminoacyl-tRNA to the A-site of ribosomes during protein biosynthesis. This chain is Elongation factor Tu, found in Campylobacter hominis (strain ATCC BAA-381 / DSM 21671 / CCUG 45161 / LMG 19568 / NCTC 13146 / CH001A).